A 252-amino-acid chain; its full sequence is 2-succinyl-6-hydroxy-2,4-cyclohexadiene-1-carboxylate synthase (252 aa).

This sequence belongs to the AB hydrolase superfamily. MenH family. As to quaternary structure, monomer.

It catalyses the reaction 5-enolpyruvoyl-6-hydroxy-2-succinyl-cyclohex-3-ene-1-carboxylate = (1R,6R)-6-hydroxy-2-succinyl-cyclohexa-2,4-diene-1-carboxylate + pyruvate. Its pathway is quinol/quinone metabolism; 1,4-dihydroxy-2-naphthoate biosynthesis; 1,4-dihydroxy-2-naphthoate from chorismate: step 3/7. It functions in the pathway quinol/quinone metabolism; menaquinone biosynthesis. Catalyzes a proton abstraction reaction that results in 2,5-elimination of pyruvate from 2-succinyl-5-enolpyruvyl-6-hydroxy-3-cyclohexene-1-carboxylate (SEPHCHC) and the formation of 2-succinyl-6-hydroxy-2,4-cyclohexadiene-1-carboxylate (SHCHC). This chain is 2-succinyl-6-hydroxy-2,4-cyclohexadiene-1-carboxylate synthase, found in Klebsiella pneumoniae subsp. pneumoniae (strain ATCC 700721 / MGH 78578).